The following is a 296-amino-acid chain: Protein-export membrane protein SecF (296 aa).

Helical transmembrane passes span M23 to V43, A144 to V164, V169 to I189, A194 to T214, G236 to A256, and V265 to L285.

The protein belongs to the SecD/SecF family. SecF subfamily. In terms of assembly, part of the protein translocation apparatus. Forms a complex with SecD.

The protein resides in the cell membrane. Involved in protein export. The chain is Protein-export membrane protein SecF from Pyrococcus furiosus (strain ATCC 43587 / DSM 3638 / JCM 8422 / Vc1).